Reading from the N-terminus, the 325-residue chain is MSETATWQPSASIPNLLKRAAIMAEIRRFFADRGVLEVETPCMSQATVTDIHLFPFETRFVGPGHSQGINLYLMTSPEYHMKRLLAAGCGPVFQLCRSFRNEEMGRHHNPEFTMLEWYRPHYDMYRLMNEVDDLLQQVLDCQPAESLSYQQAFQRHLEIDPLSADKTQLREAAAKLDLSNIADTEEDRDTLLQLLFTMGVEPHIGKEKPTFIYHFPASQASLAQISTEDHRVAERFEVYYKGIELANGFHELTDAREQQQRFEQDNRKRAARGLPQQPIDQNLLDALAAGLPDCSGVALGVDRLVMLALGAESLADVIAFTVDRA.

76–78 provides a ligand contact to substrate; that stretch reads SPE. ATP contacts are provided by residues 100–102 and N109; that span reads RNE. Residue Y118 coordinates substrate. 244–245 is an ATP binding site; the sequence is EL. Residue E251 coordinates substrate. Position 300 (G300) interacts with ATP.

This sequence belongs to the class-II aminoacyl-tRNA synthetase family. EpmA subfamily. In terms of assembly, homodimer.

The catalysed reaction is D-beta-lysine + L-lysyl-[protein] + ATP = N(6)-((3R)-3,6-diaminohexanoyl)-L-lysyl-[protein] + AMP + diphosphate + H(+). Its function is as follows. With EpmB is involved in the beta-lysylation step of the post-translational modification of translation elongation factor P (EF-P) on 'Lys-34'. Catalyzes the ATP-dependent activation of (R)-beta-lysine produced by EpmB, forming a lysyl-adenylate, from which the beta-lysyl moiety is then transferred to the epsilon-amino group of EF-P 'Lys-34'. The protein is Elongation factor P--(R)-beta-lysine ligase of Salmonella agona (strain SL483).